The chain runs to 192 residues: Phosphoheptose isomerase (192 aa).

One can recognise an SIS domain in the interval 35-192 (LIETLENQGK…CIERHFAHKN (158 aa)). A substrate-binding site is contributed by 50-52 (NGG). Zn(2+) is bound by residues His59 and Glu63. Substrate is bound by residues Glu63, 92–93 (ND), 118–120 (STS), Ser123, and Gln170. Zn(2+) is bound by residues Gln170 and His178.

It belongs to the SIS family. GmhA subfamily. Homotetramer. It depends on Zn(2+) as a cofactor.

The protein resides in the cytoplasm. It catalyses the reaction 2 D-sedoheptulose 7-phosphate = D-glycero-alpha-D-manno-heptose 7-phosphate + D-glycero-beta-D-manno-heptose 7-phosphate. Its pathway is carbohydrate biosynthesis; D-glycero-D-manno-heptose 7-phosphate biosynthesis; D-glycero-alpha-D-manno-heptose 7-phosphate and D-glycero-beta-D-manno-heptose 7-phosphate from sedoheptulose 7-phosphate: step 1/1. Functionally, catalyzes the isomerization of sedoheptulose 7-phosphate in D-glycero-D-manno-heptose 7-phosphate. This Helicobacter pylori (strain P12) protein is Phosphoheptose isomerase.